We begin with the raw amino-acid sequence, 609 residues long: MPDDFNLKSFLADLPHLPGVYRHLDAAGEAMYVGKARDLKKRVSSYFQKNLASPRIAQMVAKVASVDVTVTRSEAEALLLENNLIKSLRPRYNILFRDDKSYPYLLITGHAWPRIAYYRGATSKRGQYFGPYPNSWAVRETIQILQKVFRLRTCEDTVFANRSRPCLLHQIGRCSAPCVGVIEAEDYAHDVQRAVRFLNGEAREVMDEIEARMLQASTELRFEEAAVLRDQMGSLSKVLHQQTMENVGGDDTDVIAVASAGGKICVNLAMVRGGRHLGDKPFFPTHAEGEQPAQVLEAFVAQHYADGAMPPVLVCSHALPDSGLVGLLAEQGGTRVARVLTRPQGVRRSWLEQAQKNAEMALARALTESGARAGRTLALAEALDLDTDEESLDALRIECFDISHTAGEATQASCVVFLHHDMQPSLYRRYNIVGITPGDDYAAMRQVLTRRFGKVTDGEAPMPGLVLIDGGKGQVEVARQVFVELGLDIQSLVGVAKGEGRKVGLETLVFADGRPPVALGKESAALMLIAQVRDEAHRFAITGMRARRAKTRNVSRLEEIEGIGARRRQRLLARFGGLSGVSSASIEDLASVEGISQELAVRIYDALHG.

In terms of domain architecture, GIY-YIG spans 16-94; sequence HLPGVYRHLD…IKSLRPRYNI (79 aa). Positions 203–238 constitute a UVR domain; the sequence is REVMDEIEARMLQASTELRFEEAAVLRDQMGSLSKV.

This sequence belongs to the UvrC family. As to quaternary structure, interacts with UvrB in an incision complex.

The protein localises to the cytoplasm. In terms of biological role, the UvrABC repair system catalyzes the recognition and processing of DNA lesions. UvrC both incises the 5' and 3' sides of the lesion. The N-terminal half is responsible for the 3' incision and the C-terminal half is responsible for the 5' incision. The polypeptide is UvrABC system protein C (Bordetella pertussis (strain Tohama I / ATCC BAA-589 / NCTC 13251)).